We begin with the raw amino-acid sequence, 270 residues long: 23S rRNA (adenosine(1067)-2'-O)-methyltransferase (270 aa).

R135, R165, G218, I238, and L247 together coordinate S-adenosyl-L-methionine.

The protein belongs to the class IV-like SAM-binding methyltransferase superfamily. RNA methyltransferase TsnR/AvirB family.

It catalyses the reaction adenosine(1067) in 23S rRNA + S-adenosyl-L-methionine = 2'-O-methyladenosine(1067) in 23S rRNA + S-adenosyl-L-homocysteine + H(+). Its function is as follows. Specifically methylates the adenosine-1067 in 23S ribosomal RNA. Confers resistance to antibiotic thiostrepton. In Streptomyces laurentii, this protein is 23S rRNA (adenosine(1067)-2'-O)-methyltransferase.